Consider the following 224-residue polypeptide: Endonuclease NucS (224 aa).

Belongs to the NucS endonuclease family.

It localises to the cytoplasm. Functionally, cleaves both 3' and 5' ssDNA extremities of branched DNA structures. The polypeptide is Endonuclease NucS (Mycolicibacterium smegmatis (strain ATCC 700084 / mc(2)155) (Mycobacterium smegmatis)).